Here is a 408-residue protein sequence, read N- to C-terminus: Retron Ec48 reverse transcriptase (408 aa).

Positions 43-269 constitute a Reverse transcriptase domain; sequence EELKAIAELP…EPIKVHGLRV (227 aa). Residues Asp137, Asp216, and Asp217 each contribute to the Mg(2+) site.

The protein belongs to the bacterial reverse transcriptase family.

The catalysed reaction is DNA(n) + a 2'-deoxyribonucleoside 5'-triphosphate = DNA(n+1) + diphosphate. Its function is as follows. Reverse transcriptase (RT) component of antiviral defense system retron Ec48, composed of a non-coding RNA (ncRNA), this reverse transcriptase (RT) and the following membrane protein. Expression of this retron confers protection against bacteriophages lambda, T2, T4, T5 and T7. At multiplicity of infection (MOI) of 0.02 cultures grow normally when infected with lambda without collapsing, at MOI 2 cultures enter growth stasis. At MOI 3 cell membranes are permeabilized within 15 minutes of infection but do not lyse, suggesting the phage are not able to finish a replication cycle. Antiviral defense is suppressed by mutations that knockout the lambda gam expression or phage T7 gp5.9 expression; both viral genes inhibit host RecBCD. The Ec48 retron may sense the integrity of the RecBCD enzyme; when RecBCD is perturbed by viral proteins the Ec48 effector (the membrane protein) is activated, leading to abortive infection and bacterial growth arrest. Responsible for synthesis of msDNA-Ec48 (a branched molecule with RNA linked by a 2',5'-phosphodiester bond to ssDNA). The retron transcript serves as primer (from a conserved internal G residue) and template for the reaction, and codes for the RT. This chain is Retron Ec48 reverse transcriptase, found in Escherichia coli.